We begin with the raw amino-acid sequence, 404 residues long: Protrudin (404 aa).

The interval 1 to 20 (MQTSEREGCGPEVSPSTVPE) is disordered. Residues 1 to 66 (MQTSEREGCG…AGDGVRYLLR (66 aa)) lie on the Cytoplasmic side of the membrane. Residues 1–92 (MQTSEREGCG…LFLTLNEGAW (92 aa)) form a sufficient for homooligomerization region. Residues 1-205 (MQTSEREGCG…LYLLPLCWVL (205 aa)) are sufficient for localization to endoplasmic reticulum tubular network and for interactions with REEP1, REEP5, ATL1, ATL2, ATL3 and SPAST. Positions 51 to 64 (LEPLKDAGDGVRYL) are necessary for interaction with RAB11A and function in neurite outgrowth. Residues 67-87 (WQTPLCSLLTCLGLNVLFLTL) traverse the membrane as a helical segment. Position 88 (asparagine 88) is a topological domain, lumenal. The helical transmembrane segment at 89–109 (EGAWYSVGALMISVPALLGYL) threads the bilayer. At 110–187 (QEGCQARLSE…NPAVSSQFYG (78 aa)) the chain is on the cytoplasmic side. Positions 188-208 (ALLGTVCMLYLLPLCWVLALL) form an intramembrane region, helical. Residues 209-404 (NSTLFLGNVE…CASCNQTLSK (196 aa)) are Cytoplasmic-facing. Residues 234 to 286 (MNPKQEESAFESPPPSDAGGKGALVDCTPAPTPTEDLTPGSVEEAEEAEPDEE) form a disordered region. A necessary for interaction with KIF5A region spans residues 271–354 (TPGSVEEAEE…GCSATFSVLK (84 aa)). Over residues 276–286 (EEAEEAEPDEE) the composition is skewed to acidic residues. Residues 286-292 (EFKDAIE) are necessary for interaction with VAPA. An FYVE-type zinc finger spans residues 337–403 (TNNYGSCTGC…VCASCNQTLS (67 aa)). Cysteine 343, cysteine 346, cysteine 359, cysteine 362, cysteine 367, cysteine 370, cysteine 395, and cysteine 398 together coordinate Zn(2+).

As to quaternary structure, can form homooligomers (monomers, dimers and tetramers). Interacts with RAB11A (GDP-bound form); regulates RAB11A. Interacts with FKBP8; may negatively regulate ZFYVE27 phosphorylation. Interacts with VAPA (via MSP domain); may regulate ZFYVE27 retention in the endoplasmic reticulum and its function in cell projections formation. Interacts with VAPB (via MSP domain). Interacts with RAB11B (GDP-bound form), REEP1, REEP5, ATL1, ATL2, ATL3, SPAST, SURF4, KIF5A, KIF5B, KIF5C and RTN3. Post-translationally, phosphorylated. Phosphorylation is induced by NGF through the MAPK/ERK pathway and modulates interaction with RAB11A.

It localises to the recycling endosome membrane. The protein localises to the endoplasmic reticulum membrane. The protein resides in the cell projection. Its subcellular location is the growth cone membrane. Its function is as follows. Key regulator of RAB11-dependent vesicular trafficking during neurite extension through polarized membrane transport. Promotes axonal elongation and contributes to the establishment of neuronal cell polarity. Involved in nerve growth factor-induced neurite formation in VAPA-dependent manner. Contributes to both the formation and stabilization of the tubular ER network. Involved in ER morphogenesis by regulating the sheet-to-tubule balance and possibly the density of tubule interconnections. Acts as an adapter protein that facilitates the interaction of KIF5A with VAPA, VAPB, SURF4, RAB11A, RAB11B and RTN3 and the ZFYVE27-KIF5A complex contributes to the transport of these proteins in neurons. Can induce formation of neurite-like membrane protrusions in non-neuronal cells in a KIF5A/B-dependent manner. The chain is Protrudin (ZFYVE27) from Bos taurus (Bovine).